The primary structure comprises 395 residues: Small RNA 2'-O-methyltransferase (395 aa).

Positions 79 and 115 each coordinate S-adenosyl-L-methionine. Mg(2+) is bound by residues Glu-133, Glu-136, His-137, and His-182.

It belongs to the methyltransferase superfamily. HEN1 family. The cofactor is Mg(2+). As to expression, specifically expressed in testis.

The protein resides in the cytoplasm. The enzyme catalyses small RNA 3'-end nucleotide + S-adenosyl-L-methionine = small RNA 3'-end 2'-O-methylnucleotide + S-adenosyl-L-homocysteine + H(+). Its function is as follows. Methyltransferase that adds a 2'-O-methyl group at the 3'-end of piRNAs, a class of 24 to 30 nucleotide RNAs that are generated by a Dicer-independent mechanism and are primarily derived from transposons and other repeated sequence elements. This probably protects the 3'-end of piRNAs from uridylation activity and subsequent degradation. Stabilization of piRNAs is essential for gametogenesis. The chain is Small RNA 2'-O-methyltransferase (Henmt1) from Mus musculus (Mouse).